The primary structure comprises 370 residues: 2-Hydroxyacid oxidase 1 (370 aa).

The region spanning 1–365 (MLPRLVCISD…DKTLVRKNPL (365 aa)) is the FMN hydroxy acid dehydrogenase domain. Tyr-26 provides a ligand contact to glyoxylate. FMN contacts are provided by residues 79 to 81 (ATA), Ser-108, and Gln-130. Residue Tyr-132 participates in glyoxylate binding. Thr-158 lines the FMN pocket. Arg-167 contributes to the glyoxylate binding site. An N6-succinyllysine modification is found at Lys-184. Ser-194 and Ser-230 each carry phosphoserine. Residues Lys-236 and Ser-258 each contribute to the FMN site. 2 residues coordinate glyoxylate: His-260 and Arg-263. The active-site Proton acceptor is His-260. Residues 291-295 (DGGVR) and 314-315 (GR) contribute to the FMN site. The short motif at 368–370 (SKI) is the Microbody targeting signal element.

It belongs to the FMN-dependent alpha-hydroxy acid dehydrogenase family. As to quaternary structure, homotetramer. FMN is required as a cofactor. In terms of tissue distribution, liver.

It localises to the peroxisome matrix. It catalyses the reaction a (2S)-2-hydroxycarboxylate + O2 = a 2-oxocarboxylate + H2O2. The catalysed reaction is glycolate + O2 = glyoxylate + H2O2. The enzyme catalyses glyoxylate + O2 + H2O = oxalate + H2O2 + H(+). It carries out the reaction 2-hydroxyhexadecanoate + O2 = 2-oxohexadecanoate + H2O2. It catalyses the reaction 2-hydroxyoctanoate + O2 = 2-oxooctanoate + H2O2. Its pathway is amino-acid biosynthesis; glycine biosynthesis. In terms of biological role, broad substrate specificity (S)-2-hydroxy-acid oxidase that preferentially oxidizes glycolate. The glyoxylate produced by the oxidation of glycolate can then be utilized by alanine-glyoxylate aminotransferase for the peroxisomal synthesis of glycine; this pathway appears to be an important step for the detoxification of glyoxylate which, if allowed to accumulate, may be metabolized to oxalate with formation of kidney stones. Can also catalyze the oxidation glyoxylate, and long chain hydroxyacids such as 2-hydroxyhexadecanoate and 2-hydroxyoctanoate. Active in vitro with the artificial electron acceptor 2,6-dichlorophenolindophenol (DCIP), but O2 is believed to be the physiological electron acceptor, leading to the production of H2O2. This is 2-Hydroxyacid oxidase 1 from Mus musculus (Mouse).